Consider the following 468-residue polypeptide: 6-phospho-beta-galactosidase (468 aa).

The D-galactose 6-phosphate site is built by Gln19, His116, Asn159, Glu160, and Asn297. Residue Glu160 is the Proton donor of the active site. The Nucleophile role is filled by Glu375. The D-galactose 6-phosphate site is built by Ser428, Trp429, Lys435, and Tyr437.

It belongs to the glycosyl hydrolase 1 family.

The catalysed reaction is a 6-phospho-beta-D-galactoside + H2O = D-galactose 6-phosphate + an alcohol. Its pathway is carbohydrate metabolism; lactose degradation; D-galactose 6-phosphate and beta-D-glucose from lactose 6-phosphate: step 1/1. The polypeptide is 6-phospho-beta-galactosidase (Lactococcus lactis subsp. lactis (Streptococcus lactis)).